We begin with the raw amino-acid sequence, 331 residues long: Nucleotide sugar transporter SLC35B4 (331 aa).

Helical transmembrane passes span 4–24 (ALAV…LELL), 30–50 (GCGN…GFLF), 59–79 (PAIP…VSVV), 92–112 (LHMI…IIIL), 117–137 (SIFK…CTFM), 153–173 (GFQA…ALLM), 201–221 (ALPL…AVLF), 229–249 (IPVI…NIIT), 251–267 (YVCI…CASL), 268–288 (TVTL…ILYF), and 291–311 (PFTL…LMYT). A Mediates endoplasmic reticulum retention motif is present at residues 326–331 (KDSKKN).

It belongs to the nucleotide-sugar transporter family. SLC35B subfamily.

The protein resides in the endoplasmic reticulum membrane. It catalyses the reaction UDP-N-acetyl-alpha-D-glucosamine(in) + UDP-alpha-D-glucuronate(out) = UDP-N-acetyl-alpha-D-glucosamine(out) + UDP-alpha-D-glucuronate(in). The catalysed reaction is UDP-alpha-D-xylose(in) + UDP-alpha-D-glucuronate(out) = UDP-alpha-D-xylose(out) + UDP-alpha-D-glucuronate(in). Antiporter that transports nucleotide sugars across the endoplasmic reticulum (ER) membrane in exchange for another nucleotide sugar. May couple UDP-alpha-D-glucuronate (UDP-GlcA) or UDP-alpha-D-xylose (UDP-Xyl) efflux to UDP-alpha-D-glucuronate (UDP-GlcA) influx into the ER lumen, which in turn stimulates glucuronidation and excretion of endobiotics and xenobiotics. This chain is Nucleotide sugar transporter SLC35B4 (SLC35B4), found in Pongo abelii (Sumatran orangutan).